The primary structure comprises 484 residues: Probable receptor-like protein kinase At5g18500 (484 aa).

Residues 21–41 form a helical membrane-spanning segment; sequence IIVIVLSAIFVVVLAISLWLT. Residues 72–135 are disordered; the sequence is RVDEVSSSNG…SVSSANPLTA (64 aa). Basic and acidic residues predominate over residues 91-105; the sequence is KFGDKEPEKGIKAES. Positions 125–134 are enriched in polar residues; it reads SSVSSANPLT. The residue at position 155 (Thr-155) is a Phosphothreonine. In terms of domain architecture, Protein kinase spans 166–445; sequence FSRDNIIGDG…MLESEEYPIA (280 aa). Residues 172–180 and Lys-194 each bind ATP; that span reads IGDGGYGVV. Phosphotyrosine is present on Tyr-239. Asp-292 (proton acceptor) is an active-site residue. The residue at position 296 (Ser-296) is a Phosphoserine. Phosphothreonine is present on residues Thr-326 and Thr-331. Phosphotyrosine is present on Tyr-339. The tract at residues 425-484 is disordered; that stretch reads EKRPRMSQVARMLESEEYPIAREDRRRRRSQNGTTRDSDPPRNSTDTDKSEYHDLKPEGG. Basic and acidic residues predominate over residues 460 to 484; it reads RDSDPPRNSTDTDKSEYHDLKPEGG.

It belongs to the protein kinase superfamily. Ser/Thr protein kinase family.

It localises to the cell membrane. It carries out the reaction L-seryl-[protein] + ATP = O-phospho-L-seryl-[protein] + ADP + H(+). The catalysed reaction is L-threonyl-[protein] + ATP = O-phospho-L-threonyl-[protein] + ADP + H(+). This Arabidopsis thaliana (Mouse-ear cress) protein is Probable receptor-like protein kinase At5g18500.